Here is a 353-residue protein sequence, read N- to C-terminus: Aromatic amino acid aminotransferase (353 aa).

K217 bears the N6-(pyridoxal phosphate)lysine mark.

The protein belongs to the class-II pyridoxal-phosphate-dependent aminotransferase family. Homodimer. Pyridoxal 5'-phosphate serves as cofactor.

The enzyme catalyses an aromatic L-alpha-amino acid + 2-oxoglutarate = an aromatic oxo-acid + L-glutamate. Functionally, aminotransferase that catalyzes the conversion of aromatic amino acids and 2-oxoglutarate into corresponding aromatic oxo acids and L-glutamate. This Mycobacterium tuberculosis (strain ATCC 25177 / H37Ra) protein is Aromatic amino acid aminotransferase.